The sequence spans 544 residues: Membrane protein insertase YidC (544 aa).

6 consecutive transmembrane segments (helical) span residues 13 to 33 (LSLFLIGLFMLINDIFSSWML), 321 to 341 (LWYLIQVPMQMVMQVFYDVIP), 343 to 363 (WGLSIIFLTIVVRILIFPLTF), 409 to 429 (LGGCFPIILQLPIFFALYSLV), 461 to 481 (LYFVSWTDIRILPFIMMFTQL), and 506 to 526 (MPIMFFFILYNMPSGLLIYWI).

The protein belongs to the OXA1/ALB3/YidC family. Type 1 subfamily. Interacts with the Sec translocase complex via SecD. Specifically interacts with transmembrane segments of nascent integral membrane proteins during membrane integration.

The protein localises to the cell inner membrane. Its function is as follows. Required for the insertion and/or proper folding and/or complex formation of integral membrane proteins into the membrane. Involved in integration of membrane proteins that insert both dependently and independently of the Sec translocase complex, as well as at least some lipoproteins. Aids folding of multispanning membrane proteins. The sequence is that of Membrane protein insertase YidC from Borreliella afzelii (strain PKo) (Borrelia afzelii).